We begin with the raw amino-acid sequence, 174 residues long: Shikimate kinase 2 (174 aa).

ATP is bound at residue 12 to 17; the sequence is GAGKTT. Residues threonine 16 and aspartate 32 each coordinate Mg(2+). Substrate contacts are provided by aspartate 34, arginine 58, and glycine 79. The tract at residues 112 to 126 is LID domain; that stretch reads AEDPEEAQRPSLTGK. Arginine 120 contributes to the ATP binding site. Arginine 139 contributes to the substrate binding site. Residue glutamine 155 participates in ATP binding.

The protein belongs to the shikimate kinase family. AroL subfamily. Monomer. Mg(2+) is required as a cofactor.

Its subcellular location is the cytoplasm. It carries out the reaction shikimate + ATP = 3-phosphoshikimate + ADP + H(+). It participates in metabolic intermediate biosynthesis; chorismate biosynthesis; chorismate from D-erythrose 4-phosphate and phosphoenolpyruvate: step 5/7. Catalyzes the specific phosphorylation of the 3-hydroxyl group of shikimic acid using ATP as a cosubstrate. The sequence is that of Shikimate kinase 2 from Yersinia pseudotuberculosis serotype IB (strain PB1/+).